The chain runs to 278 residues: Tryptophan synthase alpha chain (278 aa).

Active-site proton acceptor residues include Glu50 and Asp61.

Belongs to the TrpA family. In terms of assembly, tetramer of two alpha and two beta chains.

It catalyses the reaction (1S,2R)-1-C-(indol-3-yl)glycerol 3-phosphate + L-serine = D-glyceraldehyde 3-phosphate + L-tryptophan + H2O. Its pathway is amino-acid biosynthesis; L-tryptophan biosynthesis; L-tryptophan from chorismate: step 5/5. Functionally, the alpha subunit is responsible for the aldol cleavage of indoleglycerol phosphate to indole and glyceraldehyde 3-phosphate. The polypeptide is Tryptophan synthase alpha chain (Methylorubrum populi (strain ATCC BAA-705 / NCIMB 13946 / BJ001) (Methylobacterium populi)).